A 249-amino-acid polypeptide reads, in one-letter code: DNA repair protein RecO (249 aa).

This sequence belongs to the RecO family.

Functionally, involved in DNA repair and RecF pathway recombination. The polypeptide is DNA repair protein RecO (Sinorhizobium medicae (strain WSM419) (Ensifer medicae)).